The following is a 217-amino-acid chain: uncharacterized protein (217 aa).

2 helical membrane passes run 151–171 (LIPF…HSLF) and 177–197 (ISFH…FILF).

It localises to the mitochondrion membrane. This is an uncharacterized protein from Schizosaccharomyces pombe (strain 972 / ATCC 24843) (Fission yeast).